The primary structure comprises 351 residues: Transaldolase (351 aa).

The active-site Schiff-base intermediate with substrate is K138.

This sequence belongs to the transaldolase family. Type 2 subfamily.

Its subcellular location is the cytoplasm. The enzyme catalyses D-sedoheptulose 7-phosphate + D-glyceraldehyde 3-phosphate = D-erythrose 4-phosphate + beta-D-fructose 6-phosphate. Its pathway is carbohydrate degradation; pentose phosphate pathway; D-glyceraldehyde 3-phosphate and beta-D-fructose 6-phosphate from D-ribose 5-phosphate and D-xylulose 5-phosphate (non-oxidative stage): step 2/3. Transaldolase is important for the balance of metabolites in the pentose-phosphate pathway. In Neisseria meningitidis serogroup A / serotype 4A (strain DSM 15465 / Z2491), this protein is Transaldolase (tal).